The following is a 382-amino-acid chain: Alkanesulfonate monooxygenase (382 aa).

Belongs to the SsuD family.

It carries out the reaction an alkanesulfonate + FMNH2 + O2 = an aldehyde + FMN + sulfite + H2O + 2 H(+). Functionally, catalyzes the desulfonation of aliphatic sulfonates. This is Alkanesulfonate monooxygenase from Pseudomonas putida (strain ATCC 700007 / DSM 6899 / JCM 31910 / BCRC 17059 / LMG 24140 / F1).